The chain runs to 319 residues: ATP-dependent 6-phosphofructokinase (319 aa).

An ATP-binding site is contributed by Gly-11. 21 to 25 (RAVVR) is an ADP binding site. ATP-binding positions include 72-73 (RC) and 102-105 (GEGS). Glu-103 is a binding site for Mg(2+). 126-128 (TID) is a substrate binding site. Asp-128 acts as the Proton acceptor in catalysis. Lys-155 contacts ADP. Residues Arg-163 and 170–172 (MGR) contribute to the substrate site. ADP is bound by residues 186-188 (GAE), Arg-212, and 214-216 (KIN). Residues Glu-223, Arg-244, and 250 to 253 (HVQR) each bind substrate.

This sequence belongs to the phosphofructokinase type A (PFKA) family. ATP-dependent PFK group I subfamily. Prokaryotic clade 'B1' sub-subfamily. Homotetramer. Mg(2+) is required as a cofactor.

The protein localises to the cytoplasm. It carries out the reaction beta-D-fructose 6-phosphate + ATP = beta-D-fructose 1,6-bisphosphate + ADP + H(+). It participates in carbohydrate degradation; glycolysis; D-glyceraldehyde 3-phosphate and glycerone phosphate from D-glucose: step 3/4. Allosterically activated by ADP and other diphosphonucleosides, and allosterically inhibited by phosphoenolpyruvate. Catalyzes the phosphorylation of D-fructose 6-phosphate to fructose 1,6-bisphosphate by ATP, the first committing step of glycolysis. The sequence is that of ATP-dependent 6-phosphofructokinase from Thermotoga petrophila (strain ATCC BAA-488 / DSM 13995 / JCM 10881 / RKU-1).